The chain runs to 412 residues: Gamma-glutamyl phosphate reductase (412 aa).

It belongs to the gamma-glutamyl phosphate reductase family.

Its subcellular location is the cytoplasm. The catalysed reaction is L-glutamate 5-semialdehyde + phosphate + NADP(+) = L-glutamyl 5-phosphate + NADPH + H(+). The protein operates within amino-acid biosynthesis; L-proline biosynthesis; L-glutamate 5-semialdehyde from L-glutamate: step 2/2. Its function is as follows. Catalyzes the NADPH-dependent reduction of L-glutamate 5-phosphate into L-glutamate 5-semialdehyde and phosphate. The product spontaneously undergoes cyclization to form 1-pyrroline-5-carboxylate. This Nitratiruptor sp. (strain SB155-2) protein is Gamma-glutamyl phosphate reductase.